The primary structure comprises 363 residues: Small ribosomal subunit biogenesis GTPase RsgA (363 aa).

The 157-residue stretch at 112–268 (HQQVIAANID…LIDTPGMREL (157 aa)) folds into the CP-type G domain. Residues 157–160 (TKAD) and 210–218 (GSSGAGKST) each bind GTP. Zn(2+) contacts are provided by C291, C296, H298, and C304. Residues 340 to 363 (RVAQNNRGKGSGKRPASVDRPGRH) are disordered.

It belongs to the TRAFAC class YlqF/YawG GTPase family. RsgA subfamily. Monomer. Associates with 30S ribosomal subunit, binds 16S rRNA. Zn(2+) is required as a cofactor.

Its subcellular location is the cytoplasm. Functionally, one of several proteins that assist in the late maturation steps of the functional core of the 30S ribosomal subunit. Helps release RbfA from mature subunits. May play a role in the assembly of ribosomal proteins into the subunit. Circularly permuted GTPase that catalyzes slow GTP hydrolysis, GTPase activity is stimulated by the 30S ribosomal subunit. The polypeptide is Small ribosomal subunit biogenesis GTPase RsgA (Xanthomonas axonopodis pv. citri (strain 306)).